Here is a 334-residue protein sequence, read N- to C-terminus: Tryptophan--tRNA ligase (334 aa).

Residues Q11–S13 and G19–N20 contribute to the ATP site. A 'HIGH' region motif is present at residues P12–N20. D135 contributes to the L-tryptophan binding site. ATP-binding positions include G147–D149, V186, and K195–S199. Residues K195 to S199 carry the 'KMSKS' region motif.

Belongs to the class-I aminoacyl-tRNA synthetase family. In terms of assembly, homodimer.

Its subcellular location is the cytoplasm. It catalyses the reaction tRNA(Trp) + L-tryptophan + ATP = L-tryptophyl-tRNA(Trp) + AMP + diphosphate + H(+). Catalyzes the attachment of tryptophan to tRNA(Trp). This Escherichia coli O157:H7 protein is Tryptophan--tRNA ligase.